The following is a 268-amino-acid chain: Protein atz-1 (268 aa).

The stretch at 171–243 forms a coiled coil; that stretch reads VDDANKLTEV…EEGEEDYEEE (73 aa). Positions 229–268 are disordered; it reads DLMKEEEGEEDYEEEENYEVEEDFEDEEEYDEEGEEEDYE. Over residues 231-268 the composition is skewed to acidic residues; that stretch reads MKEEEGEEDYEEEENYEVEEDFEDEEEYDEEGEEEDYE.

It is found in the nucleus. Functionally, plays a role in meiosis, germline development and oocyte morphogenesis. May play a role in DNA replication. In the germline, involved in the maintenance of transition zone nuclei and in chromosome structure and organization, but not required for mitotic proliferation. The sequence is that of Protein atz-1 from Caenorhabditis elegans.